Here is a 428-residue protein sequence, read N- to C-terminus: Histidine--tRNA ligase (428 aa).

This sequence belongs to the class-II aminoacyl-tRNA synthetase family. In terms of assembly, homodimer.

The protein resides in the cytoplasm. The enzyme catalyses tRNA(His) + L-histidine + ATP = L-histidyl-tRNA(His) + AMP + diphosphate + H(+). This is Histidine--tRNA ligase from Bordetella avium (strain 197N).